The chain runs to 92 residues: Protein OP-ORF (92 aa).

Residues 53-82 (KMLAATISILEEEVTELVTELNNTTNLTAK) are a coiled coil.

The polypeptide is Protein OP-ORF (Rice dwarf virus (isolate Fujian) (RDV)).